The primary structure comprises 397 residues: uncharacterized protein (397 aa).

This is an uncharacterized protein from Thermotoga maritima (strain ATCC 43589 / DSM 3109 / JCM 10099 / NBRC 100826 / MSB8).